The chain runs to 423 residues: Amino sugar nitrososynthase RubN8 (423 aa).

This sequence belongs to the acyl-CoA dehydrogenase family. FAD is required as a cofactor.

The protein operates within antibiotic biosynthesis. Nitrososynthase involved in the biosynthesis of rubradirin, an ansamycin antibiotic. In vitro, catalyzes the double-oxidation of TDP-L-epi-vancosamine to TDP-L-epi-vancosonitrose. In vivo, probably catalyzes the formation of D-rubranitrose, the nitro sugar moiety of rubradirin. This chain is Amino sugar nitrososynthase RubN8, found in Streptomyces rubradiris (Streptomyces achromogenes subsp. rubradiris).